A 333-amino-acid polypeptide reads, in one-letter code: Biotin synthase (333 aa).

The Radical SAM core domain maps to 47–273; it reads YYGNKVKLNM…MNPTKEIRIA (227 aa). Positions 65, 69, and 72 each coordinate [4Fe-4S] cluster. [2Fe-2S] cluster-binding residues include C109, C141, C201, and R271.

The protein belongs to the radical SAM superfamily. Biotin synthase family. As to quaternary structure, homodimer. [4Fe-4S] cluster serves as cofactor. [2Fe-2S] cluster is required as a cofactor.

It carries out the reaction (4R,5S)-dethiobiotin + (sulfur carrier)-SH + 2 reduced [2Fe-2S]-[ferredoxin] + 2 S-adenosyl-L-methionine = (sulfur carrier)-H + biotin + 2 5'-deoxyadenosine + 2 L-methionine + 2 oxidized [2Fe-2S]-[ferredoxin]. The protein operates within cofactor biosynthesis; biotin biosynthesis; biotin from 7,8-diaminononanoate: step 2/2. Catalyzes the conversion of dethiobiotin (DTB) to biotin by the insertion of a sulfur atom into dethiobiotin via a radical-based mechanism. The sequence is that of Biotin synthase from Geobacillus kaustophilus (strain HTA426).